Here is a 100-residue protein sequence, read N- to C-terminus: Small ribosomal subunit protein uS14c (100 aa).

The protein belongs to the universal ribosomal protein uS14 family. Part of the 30S ribosomal subunit.

It localises to the plastid. Its subcellular location is the chloroplast. In terms of biological role, binds 16S rRNA, required for the assembly of 30S particles. The protein is Small ribosomal subunit protein uS14c of Liriodendron tulipifera (Tuliptree).